The chain runs to 156 residues: Small ribosomal subunit protein uS7 (156 aa).

This sequence belongs to the universal ribosomal protein uS7 family. As to quaternary structure, part of the 30S ribosomal subunit. Contacts proteins S9 and S11.

Functionally, one of the primary rRNA binding proteins, it binds directly to 16S rRNA where it nucleates assembly of the head domain of the 30S subunit. Is located at the subunit interface close to the decoding center, probably blocks exit of the E-site tRNA. This Solidesulfovibrio magneticus (strain ATCC 700980 / DSM 13731 / RS-1) (Desulfovibrio magneticus) protein is Small ribosomal subunit protein uS7.